Here is a 270-residue protein sequence, read N- to C-terminus: Putative ABC transporter ATP-binding protein MG304 (270 aa).

The region spanning 1–232 (MLQVKNLSFK…LDLFHNHHFN (232 aa)) is the ABC transporter domain. An ATP-binding site is contributed by 36–43 (GHNGSGKS).

The protein belongs to the ABC transporter superfamily.

The chain is Putative ABC transporter ATP-binding protein MG304 from Mycoplasma genitalium (strain ATCC 33530 / DSM 19775 / NCTC 10195 / G37) (Mycoplasmoides genitalium).